The following is a 245-amino-acid chain: Gas vesicle protein F (245 aa).

The protein belongs to the gas vesicle GvpF/GvpL family. In terms of assembly, binds GvpA.

It localises to the gas vesicle. Its function is as follows. A minor component of the gas vesicle, may be involved in preventing GvpA aggregation during gas vesicle nucleation. Gas vesicles (GV) are hollow, gas filled proteinaceous nanostructures. During planktonic growth they allow positioning of the organism at a favorable depth for light or nutrient acquisition. This is Gas vesicle protein F from Dolichospermum flosaquae (Anabaena flos-aquae).